Consider the following 362-residue polypeptide: Fructose-bisphosphate aldolase (362 aa).

D33 contacts dihydroxyacetone phosphate. D-glyceraldehyde 3-phosphate contacts are provided by S35 and T38. R42 is a beta-D-fructose 1,6-bisphosphate binding site. K106 contacts D-glyceraldehyde 3-phosphate. K145 is a dihydroxyacetone phosphate binding site. E188 is a D-glyceraldehyde 3-phosphate binding site. The active-site Proton acceptor is the E188. Dihydroxyacetone phosphate contacts are provided by K230, S272, and G273. The Schiff-base intermediate with dihydroxyacetone phosphate role is filled by K230. Beta-D-fructose 1,6-bisphosphate contacts are provided by residues 272–274 (SGG) and S300. Dihydroxyacetone phosphate is bound by residues G302 and R303. Beta-D-fructose 1,6-bisphosphate is bound at residue R303.

It belongs to the class I fructose-bisphosphate aldolase family. In terms of assembly, homotetramer. Interacts with TRAP (via cytoplasmic domain); the interaction prevents substrate binding and thereby inhibits aldolase activity. Interacts with MTRAP (via cytoplasmic domain); MTRAP phosphorylation may increase the binding to FBPA. Interact with RH1 (via cytoplasmic domain). Interacts with RH2b (via cytoplasmic domain). Interacts with RH4 (via cytoplasmic domain). Interacts with AMA1 (via cytoplasmic domain); the interaction is weak, however it may be increased upon AMA1 phosphorylation. Interacts with EBA140 (via cytoplasmic domain); the interaction is weak. Interacts with EBA175 (via cytoplasmic domain); the interaction is weak. Interacts with EBA181 (via cytoplasmic domain); the interaction is weak. Interacts with G-actin and F-actin. May interact with ACT2/actin II; the interaction inhibits FBPA catalytic activity. Interacts with human SLC4A1/band 3 (via N-terminus); the interaction inhibits FBPA catalytic activity.

The protein resides in the cytoplasm. Its subcellular location is the membrane. It localises to the host cell membrane. It catalyses the reaction beta-D-fructose 1,6-bisphosphate = D-glyceraldehyde 3-phosphate + dihydroxyacetone phosphate. Its pathway is carbohydrate degradation; glycolysis; D-glyceraldehyde 3-phosphate and glycerone phosphate from D-glucose: step 4/4. Its activity is regulated as follows. The cytoplasmic tail of TRAP and probably other adhesins acts as a competitive inhibitor as the binding sites of the glycolytic substrate fructose 1,6-bisphosphate and TRAP partially overlap. Inhibited by suramin, an antiparasitic drug used to treat Trypanosome-mediated infection. Plays a key role in glycolysis by catalyzing the cleavage of fructose 1,6-bisphosphate into dihydroxyacetone phosphate and glyceraldehyde 3-phosphate. Independently of its catalytic activity, connects the actin filaments, and thus the actomyosin motor, to cell surface adhesins of the thrombospondin-related anonymous protein (TRAP), the erythrocyte binding ligand (EBL) and reticulocyte binding homolog (RH) protein families; this interaction is probably involved in transducing the motor force across the parasite surface required for sporozoite and ookinete gliding motility and merozoite invasion. Stimulates actin polymerisation. In Plasmodium falciparum (isolate K1 / Thailand), this protein is Fructose-bisphosphate aldolase.